The sequence spans 258 residues: Phosphate import ATP-binding protein PstB (258 aa).

In terms of domain architecture, ABC transporter spans 5 to 247 (LDLKGVNIYY…EKIFSNPSQK (243 aa)). 37 to 44 (GPSGCGKT) contacts ATP.

This sequence belongs to the ABC transporter superfamily. Phosphate importer (TC 3.A.1.7) family. The complex is composed of two ATP-binding proteins (PstB), two transmembrane proteins (PstC and PstA) and a solute-binding protein (PstS).

The protein localises to the cell membrane. It carries out the reaction phosphate(out) + ATP + H2O = ADP + 2 phosphate(in) + H(+). In terms of biological role, part of the ABC transporter complex PstSACB involved in phosphate import. Responsible for energy coupling to the transport system. In Mycolicibacterium paratuberculosis (strain ATCC BAA-968 / K-10) (Mycobacterium paratuberculosis), this protein is Phosphate import ATP-binding protein PstB.